A 147-amino-acid chain; its full sequence is Myoglobin (147 aa).

Positions 2-141 (ADFDAVLKFW…FIADMDANYK (140 aa)) constitute a Globin domain. H60 serves as a coordination point for nitrite. H60 lines the O2 pocket. H89 contributes to the heme b binding site.

The protein belongs to the globin family. In terms of assembly, monomeric.

It localises to the cytoplasm. The protein resides in the sarcoplasm. It catalyses the reaction Fe(III)-heme b-[protein] + nitric oxide + H2O = Fe(II)-heme b-[protein] + nitrite + 2 H(+). The catalysed reaction is H2O2 + AH2 = A + 2 H2O. Monomeric heme protein which primary function is to store oxygen and facilitate its diffusion within muscle tissues. Reversibly binds oxygen through a pentacoordinated heme iron and enables its timely and efficient release as needed during periods of heightened demand. Depending on the oxidative conditions of tissues and cells, and in addition to its ability to bind oxygen, it also has a nitrite reductase activity whereby it regulates the production of bioactive nitric oxide. Under stress conditions, like hypoxia and anoxia, it also protects cells against reactive oxygen species thanks to its pseudoperoxidase activity. This is Myoglobin (mb) from Scomber japonicus (Chub mackerel).